The chain runs to 363 residues: Chorismate synthase (363 aa).

Arginine 47 lines the NADP(+) pocket. FMN is bound by residues 124 to 126 (RSS), glycine 285, 300 to 304 (KPTAT), and arginine 326.

Belongs to the chorismate synthase family. As to quaternary structure, homotetramer. FMNH2 serves as cofactor.

It carries out the reaction 5-O-(1-carboxyvinyl)-3-phosphoshikimate = chorismate + phosphate. It functions in the pathway metabolic intermediate biosynthesis; chorismate biosynthesis; chorismate from D-erythrose 4-phosphate and phosphoenolpyruvate: step 7/7. Catalyzes the anti-1,4-elimination of the C-3 phosphate and the C-6 proR hydrogen from 5-enolpyruvylshikimate-3-phosphate (EPSP) to yield chorismate, which is the branch point compound that serves as the starting substrate for the three terminal pathways of aromatic amino acid biosynthesis. This reaction introduces a second double bond into the aromatic ring system. The polypeptide is Chorismate synthase (Opitutus terrae (strain DSM 11246 / JCM 15787 / PB90-1)).